The chain runs to 457 residues: Argininosuccinate lyase (457 aa).

It belongs to the lyase 1 family. Argininosuccinate lyase subfamily.

The protein localises to the cytoplasm. The enzyme catalyses 2-(N(omega)-L-arginino)succinate = fumarate + L-arginine. It functions in the pathway amino-acid biosynthesis; L-arginine biosynthesis; L-arginine from L-ornithine and carbamoyl phosphate: step 3/3. The polypeptide is Argininosuccinate lyase (Shewanella sediminis (strain HAW-EB3)).